A 146-amino-acid polypeptide reads, in one-letter code: uncharacterized protein (146 aa).

Residues A119 to S128 are compositionally biased toward basic and acidic residues. Residues A119–K146 form a disordered region.

This is an uncharacterized protein from Schizosaccharomyces pombe (strain 972 / ATCC 24843) (Fission yeast).